A 940-amino-acid chain; its full sequence is MSDYKFTLNLPETEFPMRGNLANREPEMLERWTKDGLYQQIRDSRIGRTPFILHDGPPYANGSIHIGHSVNKILKDIIIKSKTMSGFDAPYVPGWDCHGLPIELKVEQKVGKPGQKISAAEFREECRKYAAEQVNGQREDFIRLGVLGDWQNPYLTMDFSTEANIVRSLSKVIESGHLHKGVKPVHWCTDCGSALAEAEVEYEDKTSPAIDVAFVAADSKAVAAKFGVSGYSHPVSMVIWTTTPWTLPANRALSLSPELDYSLVEFEKDGVTQALILAEVLVESCLTRYNVESHTVLGSAKGAAFELVRFNHPFLDFDVPAILGDHVTTDAGTGIVHTAPGHGQDDFVVGQKYGLEVANPVGDNGVYKPDTEYFAGQHVFKANDNVVALLREKSALLNHVAYRHSYPHCWRHKTPIIFRATPQWFISMDNHGLRTQALKEIEQTQWIPDWGQSRIEKMVENRPDWCISRQRTWGVPITLFVNRETEELHSDSVSLMERVASRIEQQGIQAWWDLDAAELLGDEAEQYRKVTDTLDVWFDSGSTFSSVVAARPEFHGHGVDLYLEGSDQHRGWFMSSLMISTAMNGKAPYKQVLTHGFTVDGKGRKMSKSIGNVIAPQTVTNKLGADILRLWVAATDYSGEMTVSDEILNRSADAYRRIRNTARFLLANLNGFEPAKDLVAVEDMVALDRWVVRRAAALQQEIIEAYEQYNFHIVTQKLMQFCSVELGSFYLDIIKDRQYTAKQEGHARRSCQSALYLISEAMVRWIAPILSFTADEVWQLLPGERDAYVFTQEWYQGLKSVTLATDLSDDYWQQLLTVRNEVNKVIEQARRDKRIGGSLEAEVTLFADAALTEQLTHIGDELRFVLLTSEAKVLPLADATSEAVETELASLKLLVASSTAEKCERCWHHREEVGTIEAHPTLCTRCVTNIEGDGEVRLFA.

Positions 58–68 match the 'HIGH' region motif; that stretch reads PYANGSIHIGH. An L-isoleucyl-5'-AMP-binding site is contributed by E564. The 'KMSKS' region motif lies at 605–609; sequence KMSKS. K608 contacts ATP. Residues C903, C906, C923, and C926 each coordinate Zn(2+).

It belongs to the class-I aminoacyl-tRNA synthetase family. IleS type 1 subfamily. In terms of assembly, monomer. Zn(2+) is required as a cofactor.

Its subcellular location is the cytoplasm. It catalyses the reaction tRNA(Ile) + L-isoleucine + ATP = L-isoleucyl-tRNA(Ile) + AMP + diphosphate. Catalyzes the attachment of isoleucine to tRNA(Ile). As IleRS can inadvertently accommodate and process structurally similar amino acids such as valine, to avoid such errors it has two additional distinct tRNA(Ile)-dependent editing activities. One activity is designated as 'pretransfer' editing and involves the hydrolysis of activated Val-AMP. The other activity is designated 'posttransfer' editing and involves deacylation of mischarged Val-tRNA(Ile). The sequence is that of Isoleucine--tRNA ligase from Shewanella baltica (strain OS185).